A 107-amino-acid polypeptide reads, in one-letter code: Antimicrobial peptide damicornin (107 aa).

The signal sequence occupies residues Met1–Ala22. Positions Ala23–Arg67 are excised as a propeptide. A compositionally biased stretch (acidic residues) spans Asp37–Ala46. The tract at residues Asp37–Val62 is disordered. Over residues Asn47–Ala61 the composition is skewed to low complexity. Intrachain disulfides connect Cys69–Cys105, Cys78–Cys99, and Cys85–Cys103. Position 106 is an arginine amide (Arg106).

This sequence belongs to the coral AMP family. As to expression, is specifically expressed in the granular cells of the ectoderm.

The protein localises to the cytoplasm. Its subcellular location is the stress granule. The protein resides in the secreted. In terms of biological role, cationic peptide with probable antimicrobial activity against coral pathogens. Shows in vitro activity against Gram-positive bacteria and the filamentous fungus F.oxysporum (MIC=1.25 uM). Gram-positive bacteria tested are B.megaterium (MIC=20 uM), S.aureus (MIC=5 uM), M. luteus (MIC=1.25 uM), B.stationis (MIC=10 uM), M.maritypicum (MIC=20 uM). Has no or little effect against Gram-negative bacteria (the coral pathogen V.coralliilyticus (MIC&gt;20 uM), V.aesturianus (MIC&gt;20 uM), V.shiloi (MIC&gt;20 uM), and E.coli (MIC=10 uM)). Has no hemolytic activity against sheep erythrocytes. This chain is Antimicrobial peptide damicornin, found in Pocillopora damicornis (Cauliflower coral).